The sequence spans 40 residues: Auxin-responsive endogenous peptide 1 (40 aa).

A helical transmembrane segment spans residues 7-29 (LIYRLVVRCFLDYSICAPFYFYH).

Expressed in cotyledons, hypocotyls, roots, newly developing leaves and shoot apical meristem. Not detected in flowers, siliques or mature leaves.

It is found in the cytoplasm. The protein localises to the nucleus. It localises to the membrane. In terms of biological role, negative regulator of the auxin response. The sequence is that of Auxin-responsive endogenous peptide 1 from Arabidopsis thaliana (Mouse-ear cress).